A 179-amino-acid chain; its full sequence is MNRLKEKYLNEVVPALMSKFNYKSIMQVPKIEKIVINMGVGDAVQNPKALDSAVEELTLIAGQRPVVTRAKKSIAGFRLRQGMPIGAKVTLRGERMYEFLDKLISVSLPRVRDFRGVSKKSFDGRGNYTLGIKEQLIFPEIDYDKVNKVRGMDIVIVTTANTDEEARELLALLGMPFQK.

Belongs to the universal ribosomal protein uL5 family. As to quaternary structure, part of the 50S ribosomal subunit; part of the 5S rRNA/L5/L18/L25 subcomplex. Contacts the 5S rRNA and the P site tRNA. Forms a bridge to the 30S subunit in the 70S ribosome.

This is one of the proteins that bind and probably mediate the attachment of the 5S RNA into the large ribosomal subunit, where it forms part of the central protuberance. In the 70S ribosome it contacts protein S13 of the 30S subunit (bridge B1b), connecting the 2 subunits; this bridge is implicated in subunit movement. Contacts the P site tRNA; the 5S rRNA and some of its associated proteins might help stabilize positioning of ribosome-bound tRNAs. This Geobacillus kaustophilus (strain HTA426) protein is Large ribosomal subunit protein uL5.